A 361-amino-acid polypeptide reads, in one-letter code: NudC domain-containing protein 3 (361 aa).

Over residues 87–97 the composition is skewed to basic and acidic residues; it reads KIRRKEEEEAK. Positions 87 to 106 are disordered; the sequence is KIRRKEEEEAKTVSAAAAEK. Serine 146 is modified (phosphoserine). One can recognise a CS domain in the interval 185–277; that stretch reads AVRENYTWSQ…VGEYWWNAIL (93 aa). Serine 340 and serine 355 each carry phosphoserine.

The chain is NudC domain-containing protein 3 (NUDCD3) from Pongo abelii (Sumatran orangutan).